A 212-amino-acid polypeptide reads, in one-letter code: MAIGLVGRKVGMTRVFQEDGASVPVTVIEVLANRVTQVKSDDTDGYRALQVTTGEKKASRVTKPLAGHFAKAGTEAGRGLWEFRLQNGEGEDYAVGSELTVDIFAEVNKVDVTGTSKGKGFAGTVKRWNFSMQDATHGNSLSHRAPGSIGQNQSPGKVFKGKKMAGQMGNEQVTTQSLELVRVDAERSLLLIKGAVPGATGSDVIVKPAVKA.

The residue at position 153 (Q153) is an N5-methylglutamine.

This sequence belongs to the universal ribosomal protein uL3 family. Part of the 50S ribosomal subunit. Forms a cluster with proteins L14 and L19. Post-translationally, methylated by PrmB.

In terms of biological role, one of the primary rRNA binding proteins, it binds directly near the 3'-end of the 23S rRNA, where it nucleates assembly of the 50S subunit. The sequence is that of Large ribosomal subunit protein uL3 from Idiomarina loihiensis (strain ATCC BAA-735 / DSM 15497 / L2-TR).